The sequence spans 1093 residues: Non-canonical non-ribosomal peptide synthetase ascB (1093 aa).

Low complexity predominate over residues 1–26 (MTVNGHHTNGVNGANGTNGHANGSNG). The interval 1–27 (MTVNGHHTNGVNGANGTNGHANGSNGI) is disordered. Residues 35 to 392 (EIVPFVKPQV…LSLTFAPTDN (358 aa)) are adenylation (A) domain. Residues 591–678 (DNLEQNLKSL…EIAAALTKGS (88 aa)) enclose the Carrier domain. At serine 627 the chain carries O-(pantetheine 4'-phosphoryl)serine. A thioester reductase (TR) domain region spans residues 721–971 (LTGATGSLGS…IPVDDAASTV (251 aa)).

The protein belongs to the NRP synthetase family.

The catalysed reaction is ilicicolinate B + AH2 + ATP = ilicicolin B + A + AMP + diphosphate. The protein operates within secondary metabolite biosynthesis; terpenoid biosynthesis. Non-canonical non-ribosomal peptide synthetase; part of the asc-1 gene cluster that mediates the biosynthesis of both ascochlorin and ascofuranone, a strong inhibitor of cyanide-insensitive alternative oxidases and a promising drug candidate against African trypanosomiasis. The first step in the pathway is performed by the non-reducing polyketide synthase ascC that produces orsellinic acid by condensing acetyl-CoA with 3 malonyl-CoA units. Orsellinic acid is then prenylated by the prenyltransferase ascA to yield ilicicolinic acid B. Ilicicolinic acid B is further reduced to ilicicolin B by the reductase ascB. The halogenase ascD then chlorinates ilicicolin B to produce ilicicolin A which is converted to ilicicolin A epoxide by the cytochrome P450 monooxygenase ascE that catalyzes stereoselective epoxidation of the terminal double bond of the prenyl group. Ilicicolin A epoxide is the last common precursor for the biosynthesis of ascofuranone and ascochlorin. The terpene cyclase ascF produces a monocyclic terpene, and the cyclization reaction is proposed to be initiated by protonation of the terminal epoxide of ilicicolin A epoxide to generate a monocyclic tertiarycation, which is followed by a series of hydride and methyl shifts with abstraction of proton, leading to the formation of the (14S,15R,19R)-trimethylcyclohexanone ring structure of ilicicolin C, which is finally reduced to ascochlorin by the dehydrogenase ascG. On the other hand, ilicicolin A epoxide is hydroxylated by the cytochrome P450 monooxygenase ascH, and the resultant product is cyclized by the terpene cyclase ascI to ascofuranol via protonation-initiated epoxide ring opening, which facilitates the 6-endo-tet cyclization to form the tetrahy-drofuran ring. Finally, ascofuranol is oxidized into ascofuranone by ascJ. The protein is Non-canonical non-ribosomal peptide synthetase ascB of Acremonium egyptiacum (Oospora egyptiaca).